Consider the following 556-residue polypeptide: Phenylalanine--tRNA ligase beta subunit (556 aa).

The B5 domain maps to 278–354 (LTPKEFEVSF…IAYGYNNIDP (77 aa)). Mg(2+) is bound by residues Asp332, Asp338, Glu341, and Asp342.

Belongs to the phenylalanyl-tRNA synthetase beta subunit family. Type 2 subfamily. Tetramer of two alpha and two beta subunits. It depends on Mg(2+) as a cofactor.

The protein resides in the cytoplasm. The catalysed reaction is tRNA(Phe) + L-phenylalanine + ATP = L-phenylalanyl-tRNA(Phe) + AMP + diphosphate + H(+). The polypeptide is Phenylalanine--tRNA ligase beta subunit (Pyrococcus furiosus (strain ATCC 43587 / DSM 3638 / JCM 8422 / Vc1)).